The sequence spans 313 residues: WD repeat-containing protein 82-A (313 aa).

WD repeat units follow at residues 19 to 58 (ENSDKINCFDFSPTGETVISSSDDDSIVLYDCQEGKPKRT), 105 to 144 (GHSKRVVALSMSPVDDTFISASLDKTIRLWDLRSPNCQGL), 146 to 184 (HLQGKPVCSFDPEGLIFAAGVNSEMVKLYDLRSFDKGPF), 192 to 231 (DRTCEWTSLKFSQDGKLILMSTNGGFLRLVDAFKGAVMHT), 236 to 276 (NNSK…KVAV), and 280 to 313 (KHTGPITCLQFNPKFMTFASACSNMAFWLPTIDD).

The protein belongs to the WD repeat SWD2 family. As to quaternary structure, component of the SET1/COMPASS complex. Component of the PNUTS-PP1 phosphatase complex.

The protein resides in the nucleus. The protein localises to the chromosome. Its subcellular location is the cytoplasm. Regulatory component of the SET1/COMPASS complex implicated in the tethering of this complex to transcriptional start sites of active genes. Facilitates histone H3 'Lys-4' methylation (H3K4me) via recruitment of the SETD1A or SETD1B to the 'Ser-5' phosphorylated C-terminal domain (CTD) of RNA polymerase II large subunit (POLR2A). Component of the PNUTS-PP1 protein phosphatase complex, a protein phosphatase 1 (PP1) complex that promotes RNA polymerase II transcription pause-release, allowing transcription elongation. This is WD repeat-containing protein 82-A (wdr82-a) from Xenopus laevis (African clawed frog).